Reading from the N-terminus, the 378-residue chain is Erythronate-4-phosphate dehydrogenase (378 aa).

Residues S45 and T66 each coordinate substrate. NAD(+)-binding residues include D146 and T175. The active site involves R208. An NAD(+)-binding site is contributed by D232. E237 is an active-site residue. H254 (proton donor) is an active-site residue. An NAD(+)-binding site is contributed by G257. Substrate is bound at residue Y258.

It belongs to the D-isomer specific 2-hydroxyacid dehydrogenase family. PdxB subfamily. As to quaternary structure, homodimer.

The protein localises to the cytoplasm. It carries out the reaction 4-phospho-D-erythronate + NAD(+) = (R)-3-hydroxy-2-oxo-4-phosphooxybutanoate + NADH + H(+). Its pathway is cofactor biosynthesis; pyridoxine 5'-phosphate biosynthesis; pyridoxine 5'-phosphate from D-erythrose 4-phosphate: step 2/5. In terms of biological role, catalyzes the oxidation of erythronate-4-phosphate to 3-hydroxy-2-oxo-4-phosphonooxybutanoate. In Klebsiella pneumoniae (strain 342), this protein is Erythronate-4-phosphate dehydrogenase.